We begin with the raw amino-acid sequence, 193 residues long: Bradykinin-potentiating and C-type natriuretic peptides (193 aa).

The first 23 residues, 1 to 23 (MFVSRLAASGLLLLALLALSLDG), serve as a signal peptide directing secretion. Positions 24-27 (KPVH) are excised as a propeptide. A disordered region spans residues 25-173 (PVHQSKPGRS…RMKGLAKKAM (149 aa)). Gln-28 carries the post-translational modification Pyrrolidone carboxylic acid. 2 propeptides span residues 40 to 43 (LSAQ) and 58 to 64 (LSVQQWS). The residue at position 65 (Gln-65) is a Pyrrolidone carboxylic acid. The propeptide occupies 75–169 (VVVQPHESPA…GGARRMKGLA (95 aa)). The segment covering 95–123 (SPGPEAASGPAAPHRLPKSKGASATSAAS) has biased composition (low complexity). The span at 125-150 (PMRDLRTDGKQERQKWGRMVQPDHHA) shows a compositional bias: basic and acidic residues. Residues 152-162 (PGGGGGGGGGA) are compositionally biased toward gly residues. Residues 163–173 (RRMKGLAKKAM) are compositionally biased toward basic residues. Cys-177 and Cys-193 are oxidised to a cystine.

It in the N-terminal section; belongs to the bradykinin-potentiating peptide family. In the C-terminal section; belongs to the natriuretic peptide family. Expressed by the venom gland.

It localises to the secreted. In terms of biological role, bradykinin-potentiating peptide both inhibits the activity of the angiotensin-converting enzyme (ACE) and enhances the action of bradykinin by inhibiting the peptidases that inactivate it. It acts as an indirect hypotensive agent. Neither synthetic Tf1, nor synthetic Tf2 show bradykinin-potentiating effects. Its function is as follows. Has a vasorelaxant activity in rat aortic strips and a diuretic potency in anesthetized rats. Has a vasorelaxant activity in rat aortic strips and a diuretic potency in anesthetized rats. Is as potent as Tf-CNP. The sequence is that of Bradykinin-potentiating and C-type natriuretic peptides from Protobothrops flavoviridis (Habu).